The primary structure comprises 158 residues: Ribonucleases P/MRP protein subunit POP6 (158 aa).

Residues 51 to 71 (KNDNIKKSVNKLDKQINMADR) are a coiled coil.

As to quaternary structure, component of nuclear RNase P and RNase MRP complexes. RNase P consists of an RNA moiety and at least 9 protein subunits including POP1, POP3, POP4, POP5, POP6, POP7, POP8, RPP1 and RPR2. RNase MRP complex consists of an RNA moiety and at least 10 protein subunits including POP1, POP3, POP4, POP5, POP6, POP7, POP8, RMP1, RPP1 and SNM1, many of which are shared with the RNase P complex.

The protein resides in the nucleus. The enzyme catalyses Endonucleolytic cleavage of RNA, removing 5'-extranucleotides from tRNA precursor.. Component of ribonuclease P, a protein complex that generates mature tRNA molecules by cleaving their 5'-ends. Also a component of RNase MRP, which cleaves pre-rRNA sequences. This is Ribonucleases P/MRP protein subunit POP6 (POP6) from Saccharomyces cerevisiae (strain ATCC 204508 / S288c) (Baker's yeast).